The following is a 91-amino-acid chain: Small ribosomal subunit protein bS20 (91 aa).

The interval 1–26 (MANLKSSKKDIRRTARRKERNGEDRT) is disordered.

It belongs to the bacterial ribosomal protein bS20 family.

In terms of biological role, binds directly to 16S ribosomal RNA. This is Small ribosomal subunit protein bS20 from Leptospira biflexa serovar Patoc (strain Patoc 1 / Ames).